The sequence spans 432 residues: 3-phosphoshikimate 1-carboxyvinyltransferase (432 aa).

3-phosphoshikimate contacts are provided by K23, S24, and R28. K23 serves as a coordination point for phosphoenolpyruvate. Positions 95 and 123 each coordinate phosphoenolpyruvate. 3-phosphoshikimate is bound by residues S167, Q169, D317, and K344. Q169 is a binding site for phosphoenolpyruvate. D317 serves as the catalytic Proton acceptor. Phosphoenolpyruvate-binding residues include R348 and R390.

The protein belongs to the EPSP synthase family. Monomer.

It is found in the cytoplasm. It carries out the reaction 3-phosphoshikimate + phosphoenolpyruvate = 5-O-(1-carboxyvinyl)-3-phosphoshikimate + phosphate. It functions in the pathway metabolic intermediate biosynthesis; chorismate biosynthesis; chorismate from D-erythrose 4-phosphate and phosphoenolpyruvate: step 6/7. In terms of biological role, catalyzes the transfer of the enolpyruvyl moiety of phosphoenolpyruvate (PEP) to the 5-hydroxyl of shikimate-3-phosphate (S3P) to produce enolpyruvyl shikimate-3-phosphate and inorganic phosphate. The polypeptide is 3-phosphoshikimate 1-carboxyvinyltransferase (Staphylococcus saprophyticus subsp. saprophyticus (strain ATCC 15305 / DSM 20229 / NCIMB 8711 / NCTC 7292 / S-41)).